A 471-amino-acid chain; its full sequence is UDP-N-acetylmuramoylalanine--D-glutamate ligase (471 aa).

Position 122–128 (122–128) interacts with ATP; it reads GSNAKST.

It belongs to the MurCDEF family.

The protein localises to the cytoplasm. It catalyses the reaction UDP-N-acetyl-alpha-D-muramoyl-L-alanine + D-glutamate + ATP = UDP-N-acetyl-alpha-D-muramoyl-L-alanyl-D-glutamate + ADP + phosphate + H(+). It participates in cell wall biogenesis; peptidoglycan biosynthesis. Cell wall formation. Catalyzes the addition of glutamate to the nucleotide precursor UDP-N-acetylmuramoyl-L-alanine (UMA). This chain is UDP-N-acetylmuramoylalanine--D-glutamate ligase, found in Psychrobacter cryohalolentis (strain ATCC BAA-1226 / DSM 17306 / VKM B-2378 / K5).